The sequence spans 445 residues: Na(+)-translocating NADH-quinone reductase subunit A (445 aa).

This sequence belongs to the NqrA family. As to quaternary structure, composed of six subunits; NqrA, NqrB, NqrC, NqrD, NqrE and NqrF.

It carries out the reaction a ubiquinone + n Na(+)(in) + NADH + H(+) = a ubiquinol + n Na(+)(out) + NAD(+). NQR complex catalyzes the reduction of ubiquinone-1 to ubiquinol by two successive reactions, coupled with the transport of Na(+) ions from the cytoplasm to the periplasm. NqrA to NqrE are probably involved in the second step, the conversion of ubisemiquinone to ubiquinol. In Marinomonas sp. (strain MWYL1), this protein is Na(+)-translocating NADH-quinone reductase subunit A.